A 266-amino-acid polypeptide reads, in one-letter code: N-acetylneuraminate lyase B (266 aa).

Aceneuramate contacts are provided by threonine 51 and threonine 52. Tyrosine 143 functions as the Proton donor in the catalytic mechanism. Lysine 173 (schiff-base intermediate with substrate) is an active-site residue. Aceneuramate contacts are provided by serine 175, glycine 197, aspartate 199, glutamate 200, and serine 216.

The protein belongs to the DapA family. NanA subfamily. In terms of assembly, homotetramer.

The protein localises to the cytoplasm. The catalysed reaction is aceneuramate = aldehydo-N-acetyl-D-mannosamine + pyruvate. It functions in the pathway amino-sugar metabolism; N-acetylneuraminate degradation. Functionally, catalyzes the cleavage of N-acetylneuraminic acid (sialic acid) to form pyruvate and N-acetylmannosamine via a Schiff base intermediate. It prevents sialic acids from being recycled and returning to the cell surface. Involved in the N-glycolylneuraminic acid (Neu5Gc) degradation pathway. The chain is N-acetylneuraminate lyase B (npl-b) from Xenopus laevis (African clawed frog).